The sequence spans 116 residues: MKKEYRVKKDKEFQAVFTRGASVANRQFVVYALKKEQQTHFRIGLSVSKKIGNAVVRNQVKRYVREACQLHEASLAPNYDFVIIARNPAAKMTAQEVADSLRHVFKRSGVWKRQVK.

Belongs to the RnpA family. In terms of assembly, consists of a catalytic RNA component (M1 or rnpB) and a protein subunit.

It carries out the reaction Endonucleolytic cleavage of RNA, removing 5'-extranucleotides from tRNA precursor.. RNaseP catalyzes the removal of the 5'-leader sequence from pre-tRNA to produce the mature 5'-terminus. It can also cleave other RNA substrates such as 4.5S RNA. The protein component plays an auxiliary but essential role in vivo by binding to the 5'-leader sequence and broadening the substrate specificity of the ribozyme. This Exiguobacterium sibiricum (strain DSM 17290 / CCUG 55495 / CIP 109462 / JCM 13490 / 255-15) protein is Ribonuclease P protein component.